The chain runs to 302 residues: Putative 2-dehydro-3-deoxy-D-gluconate aldolase YagE (302 aa).

Catalysis depends on charge relay system residues serine 49 and tyrosine 112. Catalysis depends on tyrosine 138, which acts as the Proton donor. Lysine 167 acts as the Schiff-base intermediate with substrate in catalysis.

This sequence belongs to the DapA family. A dimer of dimers.

Its subcellular location is the cytoplasm. The enzyme catalyses 2-dehydro-3-deoxy-D-gluconate = D-glyceraldehyde + pyruvate. It carries out the reaction 2-dehydro-3-deoxy-D-arabinonate = glycolaldehyde + pyruvate. Its function is as follows. Catalyzes the formation of 2-keto-3-deoxy-gluconate (KDG) from pyruvate and glyceraldehyde. May also function as a 2-dehydro-3-deoxy-D-pentonate aldolase. Overexpression leads to increased growth (over 2 hours) in the presence of the antibiotics norfloxacin, ampicillin and streptomycin. This is Putative 2-dehydro-3-deoxy-D-gluconate aldolase YagE (yagE) from Escherichia coli (strain K12).